We begin with the raw amino-acid sequence, 118 residues long: Beta-2-microglobulin (118 aa).

Residues 1–20 form the signal peptide; it reads MARVVALVLLGLLSLTGLEA. Residues 25 to 111 enclose the Ig-like C1-type domain; sequence PKVQVYSRHP…QHSTLKEPLI (87 aa). Cysteines 45 and 99 form a disulfide.

This sequence belongs to the beta-2-microglobulin family. Heterodimer of an alpha chain and a beta chain. Beta-2-microglobulin is the beta-chain of major histocompatibility complex class I molecules.

The protein localises to the secreted. In terms of biological role, component of the class I major histocompatibility complex (MHC). Involved in the presentation of peptide antigens to the immune system. This is Beta-2-microglobulin (B2M) from Equus asinus (Donkey).